The sequence spans 241 residues: Probable xyloglucan-specific endo-beta-1,4-glucanase A (241 aa).

An N-terminal signal peptide occupies residues 1–15; the sequence is MKVLALSALLSLASA. A glycan (N-linked (GlcNAc...) asparagine) is linked at N47.

It belongs to the glycosyl hydrolase 12 (cellulase H) family.

Its subcellular location is the secreted. The enzyme catalyses xyloglucan + H2O = xyloglucan oligosaccharides.. Catalyzes endohydrolysis of 1,4-beta-D-glucosidic linkages in xyloglucan with retention of the beta-configuration of the glycosyl residues. Specific for xyloglucan and does not hydrolyze other cell wall components. This chain is Probable xyloglucan-specific endo-beta-1,4-glucanase A (xgeA), found in Aspergillus niger (strain ATCC MYA-4892 / CBS 513.88 / FGSC A1513).